The following is a 180-amino-acid chain: Translation initiation factor IF-3 (180 aa).

It belongs to the IF-3 family. As to quaternary structure, monomer.

It localises to the cytoplasm. IF-3 binds to the 30S ribosomal subunit and shifts the equilibrium between 70S ribosomes and their 50S and 30S subunits in favor of the free subunits, thus enhancing the availability of 30S subunits on which protein synthesis initiation begins. In Xylella fastidiosa (strain 9a5c), this protein is Translation initiation factor IF-3.